The following is a 179-amino-acid chain: tRNA (cytidine(56)-2'-O)-methyltransferase (179 aa).

Residues leucine 82, 110 to 114 (GAEKV), and 128 to 135 (VGNQPHSE) each bind S-adenosyl-L-methionine.

This sequence belongs to the aTrm56 family. In terms of assembly, homodimer.

Its subcellular location is the cytoplasm. It carries out the reaction cytidine(56) in tRNA + S-adenosyl-L-methionine = 2'-O-methylcytidine(56) in tRNA + S-adenosyl-L-homocysteine + H(+). Functionally, specifically catalyzes the AdoMet-dependent 2'-O-ribose methylation of cytidine at position 56 in tRNAs. The protein is tRNA (cytidine(56)-2'-O)-methyltransferase of Methanocaldococcus jannaschii (strain ATCC 43067 / DSM 2661 / JAL-1 / JCM 10045 / NBRC 100440) (Methanococcus jannaschii).